The sequence spans 492 residues: Cytochrome P450 2A1 (492 aa).

Serine 130 carries the phosphoserine modification. Cysteine 437 lines the heme pocket.

It belongs to the cytochrome P450 family. Requires heme as cofactor. Liver and testis.

The protein resides in the endoplasmic reticulum membrane. It localises to the microsome membrane. The catalysed reaction is an organic molecule + reduced [NADPH--hemoprotein reductase] + O2 = an alcohol + oxidized [NADPH--hemoprotein reductase] + H2O + H(+). Highly active in the 7-alpha-hydroxylation of testosterone, progesterone and androstenedione. The polypeptide is Cytochrome P450 2A1 (Cyp2a1) (Rattus norvegicus (Rat)).